A 514-amino-acid polypeptide reads, in one-letter code: Zinc finger CCCH-type with G patch domain-containing protein (514 aa).

A disordered region spans residues 96–129 (GEEPQPPGAGDGASTGSKDSEEEEEEEDGSSGMK). Acidic residues predominate over residues 115-124 (SEEEEEEEDG). A C3H1-type zinc finger spans residues 171-197 (KAMKPCPFFLDGKCRFDDSCRFSHGQV). Disordered regions lie at residues 262 to 288 (IPPLRGSDSSSSDDDDDDEEEDDAAED), 363 to 422 (QQRK…AAER), and 494 to 514 (EEHSLQREQRKADTHKKMTEF). The segment covering 272–287 (SSDDDDDDEEEDDAAE) has biased composition (acidic residues). The G-patch domain occupies 315-373 (TRGIGSKLLARMGYEIGKGLGRNAEGRVEPIQAVLLPKGKSLDQCIEMQQRKKAGGKRE). Over residues 365-383 (RKKAGGKREHKAGKRRPRA) the composition is skewed to basic residues.

Its subcellular location is the nucleus. Functionally, transcription repressor that specifically binds the 5'-GGAG[GA]A[GA]A-3' consensus sequence. Represses transcription by recruiting the chromatin multiprotein complex NuRD to target promoters. Negatively regulates expression of EGFR, a gene involved in cell proliferation, survival and migration. The chain is Zinc finger CCCH-type with G patch domain-containing protein (zgpat) from Xenopus tropicalis (Western clawed frog).